The following is a 1960-amino-acid chain: MSRPRFNPRGTFPLQRPRAPNPPGMRPPGPFVRPGSMGLPRFYPAGRARGIPHRFPGHGSYQNMGPQRMNVQVTQHRTDPRLTKEKLDFPEAQQKKGKPHGSRWDDESHITPPVEVKQSSVTQVTEQSPKVQSRYTKESASSILASFGLSNEDLEELSRYPDEQLTPENMPLILRDIRMRKMSRRLPNLPSHSRNKETLSNETVSSNVIDYGHASKYGYTEDPLEVRIYDPEIPTDEVKNEFQPQQSISATVSTPNVICNSVFPGGDMFRQMDFPGESSSQSFFPVESGTKMSGLHISGQSVLEPVKSISQSISQTVSQTTSQSLNPPSMNQVPFTFELDAVLRQQERISQKSVISSADAHGGPTESKKDYQSEADLPIRSPFGIVKASWLPKFTQAGAQKMKRLPTPSMMNDYYAASPRIFPHLCSLCNVECSHLKDWIQHQNTSTHIESCRQLRQQYPDWNPEILPSRRNESNRKENETPRRRSHSPSPRHSRRSSSGHRIRRSRSPVRYIYRPRSRSPRICHRFISKYRSRSRSRSRSRSPYRSRNLLRRSPKSYRSASPERTSRKSVRSDRKKALEDGGQRSVHGTEVTKQKHTETVDKGLSPAQKPKLASGTKPSAKSLSSVKSDSHLGAYSAHKSENLEDDTLPEGKQESGKSALAQRKPQKDQSLSSNSILLVSELPEDGFTEEDIRKAFLPFGKISDVLLVPCRNEAYLEMELRKAVTSIMKYIETMPLVIKGKSVKVCVPGKKKPQNKEMKKKPSDIKKSSASALKKETDASKTMETVSSSSSAKSGQIKSSTVKVNKCAGKSAGSVKSVVTVAAKGKASIKTAKSGKKSLEAKKSGNIKNKDSNKPVTVPANSEIKASSEDKATGKSAEESPSGTLEATEKEPVNKESEEMSVVFISNLPNKGYSTEEIYNLAKPFGALKDILVLSSHKKAYIEINKKSADSMVKFYTCFPISMDGNQLSISMAPEHVDLKDEEALFTTLIQENDPEANIDKIYNRFVHLDNLPEDGLQCVLCVGHQFGKVDRYMFMSNKNKVILQLESPESALSMYNFLKQNPQNIGEHVLTCTLSPKTDSEVQRKNDLELGKGSTFSPDLKNSPVDESEVQTAADSSSVKPSEVEEETTSNIGTETSVHQEELGKEEPKQALCESDFAIQTLELEAQGAEVSIEIPLVASTPANIELFSENIDESALNQQMYTSDFEKEEAEVTNPETELAVSDSVFIEERNIKGIIEDSPSETEDIFSGIVQPMVDAIAEVDKHETVSEVLPSACNVTQAPGSYIEDEKVVSKKDIAEKVILDEKEEDEFNVKETRMDLQVKTEKAEKNEAIIFKEKLEKIIAAIREKPIESSVIKADPTKGLDQTSKPDETGKSSVLTVSNVYSSKSSIKATVVSSPKAKSTPSKTESHSTFPKPVLREQIKADKKVSAKEFGLLKNTRSGLAESNSKSKPTQIGVNRGCSGRISALQCKDSKVDYKDITKQSQETETKPPIMKRDDSNNKALALQNTKNSKSTTDRSSKSKEEPLFTFNLDEFVTVDEVIEEVNPSQAKQNPLKGKRKEALKISPSPELNLKKKKGKTSVPHSVEGELSFVTLDEIGEEEDATVQALVTVDEVIDEEELNMEEMVKNSNSLLTLDELIDQDDCIPHSGPKDVTVLSMAEEQDLQQERLVTVDEIGEVEESADITFATLNAKRDKRDSIGFISSQMPEDPSTLVTVDEIQDDSSDFHLMTLDEVTEEDENSLADFNNLKEELNFVTVDEVGDEEDGDNDSKVELARGKIEHHTDKKGNRKRRAVDPKKSKLDSFSQVGPGSETVTQKDLKTMPERHLAAKTPMKRVRLGKSSPSQKVAEPTKGEEAFQMSEGVDDAELKDSEPDEKRRKTQDSSVGKSMTSDVPGDLDFLVPKAGFFCPICSLFYSGEKAMANHCKSTRHKQNTEKFMAKQRKEKEQNETEERSSR.

Residues 1–137 are disordered; that stretch reads MSRPRFNPRG…SPKVQSRYTK (137 aa). Over residues 19-31 the composition is skewed to pro residues; it reads APNPPGMRPPGPF. Asymmetric dimethylarginine occurs at positions 47, 49, and 54. Residues 60–75 are compositionally biased toward polar residues; sequence SYQNMGPQRMNVQVTQ. The segment covering 76 to 89 has biased composition (basic and acidic residues); sequence HRTDPRLTKEKLDF. Residues 117 to 137 show a composition bias toward polar residues; it reads KQSSVTQVTEQSPKVQSRYTK. 2 positions are modified to phosphoserine: Ser128 and Ser288. Lys291 is covalently cross-linked (Glycyl lysine isopeptide (Lys-Gly) (interchain with G-Cter in SUMO2)). A phosphoserine mark is found at Ser298, Ser367, Ser381, and Ser418. Positions 352-373 are disordered; it reads KSVISSADAHGGPTESKKDYQS. Disordered regions lie at residues 463–673, 749–804, and 827–899; these read NPEI…QSLS, PGKK…STVK, and KASI…KESE. A compositionally biased stretch (basic and acidic residues) spans 468-483; it reads PSRRNESNRKENETPR. An involved in localization to nuclear speckles region spans residues 470-573; that stretch reads RRNESNRKEN…ERTSRKSVRS (104 aa). Basic residues predominate over residues 484–556; the sequence is RRSHSPSPRH…SRNLLRRSPK (73 aa). Ser554 is modified (phosphoserine). Composition is skewed to basic and acidic residues over residues 565–583 and 591–602; these read RTSR…EDGG and EVTKQKHTETVD. A phosphoserine mark is found at Ser606 and Ser615. Positions 618–628 are enriched in low complexity; it reads KPSAKSLSSVK. At Ser637 the chain carries Phosphoserine. The region spanning 676-751 is the RRM 1 domain; the sequence is SILLVSELPE…KSVKVCVPGK (76 aa). Positions 755-782 are enriched in basic and acidic residues; sequence QNKEMKKKPSDIKKSSASALKKETDASK. A Glycyl lysine isopeptide (Lys-Gly) (interchain with G-Cter in SUMO2) cross-link involves residue Lys775. Residues 783 to 802 show a composition bias toward low complexity; it reads TMETVSSSSSAKSGQIKSST. Basic and acidic residues-rich tracts occupy residues 838 to 854, 867 to 879, and 888 to 899; these read KSLE…KDSN, ASSE…KSAE, and ATEKEPVNKESE. The RRM 2 domain maps to 902-976; that stretch reads SVVFISNLPN…NQLSISMAPE (75 aa). Over residues 1082–1092 the composition is skewed to basic and acidic residues; that stretch reads SEVQRKNDLEL. Disordered stretches follow at residues 1082-1151, 1396-1420, 1442-1462, 1484-1527, and 1550-1583; these read SEVQ…EEPK, TVVS…PKPV, TRSG…GVNR, TKQS…KSKE, and PSQA…KGKT. A Phosphoserine modification is found at Ser1099. The span at 1140 to 1151 shows a compositional bias: basic and acidic residues; it reads VHQEELGKEEPK. Low complexity predominate over residues 1399–1409; it reads SSPKAKSTPSK. Residue Ser1400 is modified to Phosphoserine. The segment covering 1442–1459 has biased composition (polar residues); that stretch reads TRSGLAESNSKSKPTQIG. Basic and acidic residues-rich tracts occupy residues 1484–1503 and 1518–1527; these read TKQS…DDSN and TTDRSSKSKE. 2 positions are modified to phosphoserine: Ser1635 and Ser1661. Disordered stretches follow at residues 1763 to 1898 and 1930 to 1960; these read EVGD…SDVP and KSTR…RSSR. Basic and acidic residues predominate over residues 1772-1790; sequence NDSKVELARGKIEHHTDKK. A Glycyl lysine isopeptide (Lys-Gly) (interchain with G-Cter in SUMO2) cross-link involves residue Lys1804. Residues 1806–1818 are compositionally biased toward polar residues; it reads DSFSQVGPGSETV. Residues 1819–1831 are compositionally biased toward basic and acidic residues; it reads TQKDLKTMPERHL. Residue Ser1864 is modified to Phosphoserine. A compositionally biased stretch (basic and acidic residues) spans 1870–1885; sequence AELKDSEPDEKRRKTQ. The segment at 1876-1906 adopts a Matrin-type zinc-finger fold; that stretch reads EPDEKRRKTQDSSVGKSMTSDVPGDLDFLVP. The segment covering 1886-1895 has biased composition (polar residues); sequence DSSVGKSMTS. Residues 1936 to 1960 are compositionally biased toward basic and acidic residues; that stretch reads QNTEKFMAKQRKEKEQNETEERSSR.

Interacts with FHL2. Interacts with CEBPA, CEBPD and CEBPG. Interacts with MPHOSPH8 and TASOR components of the HUSH complex; leading to recruitment of the HUSH complex. Interacts with SETDB1. Interacts with HDAC1. Interacts with HDAC4.

It is found in the nucleus speckle. Functionally, transcription factor that binds to cytidine clusters in double-stranded DNA. Plays a key role in the silencing of unintegrated retroviral DNA: some part of the retroviral DNA formed immediately after infection remains unintegrated in the host genome and is transcriptionally repressed. Mediates transcriptional repression of unintegrated viral DNA by specifically binding to the cytidine clusters of retroviral DNA and mediating the recruitment of chromatin silencers, such as the HUSH complex, SETDB1 and the histone deacetylases HDAC1 and HDAC4. Acts as an early regulator of adipogenesis by acting as a transcription cofactor of CEBPs (CEBPA, CEBPD and/or CEBPG), controlling the expression of PPARG and probably of other proadipogenic genes, such as SREBF1. May also regulate alternative splicing of target genes during adipogenesis. The polypeptide is Zinc finger protein 638 (Mus musculus (Mouse)).